A 457-amino-acid polypeptide reads, in one-letter code: Aromatic amino acid transport protein AroP (457 aa).

Over 1–19 (MMEGQQHGEQLKRGLKNRH) the chain is Cytoplasmic. Residues 20 to 40 (IQLIALGGAIGTGLFLGSASV) traverse the membrane as a helical segment. The Periplasmic portion of the chain corresponds to 41–42 (IQ). Residues 43-63 (SAGPGIILGYAIAGFIAFLIM) form a helical membrane-spanning segment. Residues 64-86 (RQLGEMVVEEPVAGSFSHFAYKY) are Cytoplasmic-facing. Residues 87–107 (WGSFAGFASGWNYWVLYVLVA) traverse the membrane as a helical segment. The Periplasmic segment spans residues 108-117 (MAELTAVGKY). A helical membrane pass occupies residues 118–138 (IQFWYPEIPTWVSAAVFFVVI). Residues 139-155 (NAINLTNVKVFGEMEFW) lie on the Cytoplasmic side of the membrane. Residues 156-176 (FAIIKVIAVVAMIIFGGWLLF) form a helical membrane-spanning segment. Topologically, residues 177–201 (SGNGGPQASVSNLWDQGGFLPHGFT) are periplasmic. Residues 202–222 (GLVMMMAIIMFSFGGLELVGI) form a helical membrane-spanning segment. The Cytoplasmic portion of the chain corresponds to 223 to 240 (TAAEADNPEQSIPKATNQ). The chain crosses the membrane as a helical span at residues 241–261 (VIYRILIFYIGSLAVLLSLMP). The Periplasmic portion of the chain corresponds to 262–271 (WTRVTADTSP). The helical transmembrane segment at 272-292 (FVLIFHELGDTFVANALNIVV) threads the bilayer. Over 293 to 333 (LTAALSVYNSCVYCNSRMLFGLAQQGNAPKALASVDKRGVP) the chain is Cytoplasmic. The chain crosses the membrane as a helical span at residues 334 to 354 (VNTILVSALVTALCVLINYLA). Residues 355–358 (PESA) lie on the Periplasmic side of the membrane. The chain crosses the membrane as a helical span at residues 359-379 (FGLLMALVVSALVINWAMISL). Topologically, residues 380–399 (AHMKFRRAKQEQGVVTRFPA) are cytoplasmic. Residues 400-420 (LLYPLGNWICLLFMAAVLVIM) traverse the membrane as a helical segment. Residues 421 to 425 (LMTPG) lie on the Periplasmic side of the membrane. A helical membrane pass occupies residues 426-446 (MAISVYLIPVWLIVLGIGYLF). Over 447–457 (KEKTAKAVKAH) the chain is Cytoplasmic.

The protein belongs to the amino acid-polyamine-organocation (APC) superfamily. Amino acid transporter (AAT) (TC 2.A.3.1) family.

The protein localises to the cell inner membrane. The catalysed reaction is L-phenylalanine(in) + H(+)(in) = L-phenylalanine(out) + H(+)(out). It carries out the reaction L-tryptophan(in) + H(+)(in) = L-tryptophan(out) + H(+)(out). It catalyses the reaction L-tyrosine(in) + H(+)(in) = L-tyrosine(out) + H(+)(out). In terms of biological role, permease that is involved in the active transport across the cytoplasmic membrane of all three aromatic amino acids, phenylalanine, tyrosine and tryptophan. The polypeptide is Aromatic amino acid transport protein AroP (aroP) (Shigella flexneri).